The chain runs to 90 residues: DNA-binding protein HU-alpha (90 aa).

This sequence belongs to the bacterial histone-like protein family. Heterodimer of an alpha and a beta chain.

Its function is as follows. Histone-like DNA-binding protein which is capable of wrapping DNA to stabilize it, and thus to prevent its denaturation under extreme environmental conditions. In Vibrio cholerae serotype O1 (strain ATCC 39315 / El Tor Inaba N16961), this protein is DNA-binding protein HU-alpha (hupA).